We begin with the raw amino-acid sequence, 466 residues long: Myocardial zonula adherens protein (466 aa).

Polar residues predominate over residues 1–10 (MLRSTSTVTL). Positions 1–16 (MLRSTSTVTLFSGGGA) are cleaved as a signal peptide. Residues 1-68 (MLRSTSTVTL…SNGESTKRLP (68 aa)) form a disordered region. Basic and acidic residues predominate over residues 45 to 55 (TEKKIERKDQP). Coiled-coil stretches lie at residues 95-137 (NQLK…QDLS) and 187-415 (HIKD…LTET).

The protein belongs to the MYZAP family. As to quaternary structure, interacts with DSP, MPRIP and TJP1/ZO1. Interaction with MPRIP inhibits the activation of transcription factor SRF. Interacts with GRIN1. Interacts with DYNLL1. Detected in heart myocardium and lung.

It is found in the cytoplasm. The protein resides in the cytoskeleton. Its subcellular location is the cell membrane. It localises to the myofibril. The protein localises to the sarcomere. It is found in the i band. The protein resides in the z line. Its subcellular location is the cell junction. Functionally, plays a role in cellular signaling via Rho-related GTP-binding proteins and activation of transcription factor SRF. Targets TJP1 to cell junctions. In cortical neurons, may play a role in glutaminergic signal transduction through interaction with the NMDA receptor subunit GRIN1. This Mus musculus (Mouse) protein is Myocardial zonula adherens protein (Myzap).